The following is a 209-amino-acid chain: Ribose 1,5-bisphosphate phosphokinase PhnN (209 aa).

27 to 34 (GPSGGGKD) is an ATP binding site.

The protein belongs to the ribose 1,5-bisphosphokinase family.

The enzyme catalyses alpha-D-ribose 1,5-bisphosphate + ATP = 5-phospho-alpha-D-ribose 1-diphosphate + ADP. Its pathway is metabolic intermediate biosynthesis; 5-phospho-alpha-D-ribose 1-diphosphate biosynthesis; 5-phospho-alpha-D-ribose 1-diphosphate from D-ribose 5-phosphate (route II): step 3/3. In terms of biological role, catalyzes the phosphorylation of ribose 1,5-bisphosphate to 5-phospho-D-ribosyl alpha-1-diphosphate (PRPP). The protein is Ribose 1,5-bisphosphate phosphokinase PhnN of Chelativorans sp. (strain BNC1).